A 220-amino-acid polypeptide reads, in one-letter code: Probable GTP-binding protein EngB (220 aa).

In terms of domain architecture, EngB-type G spans 26-200; it reads EGIEIAFAGR…RAKLDEWYAP (175 aa). GTP is bound by residues 34 to 41, 61 to 65, 79 to 82, 146 to 149, and 179 to 181; these read GRSNAGKS, GRTQL, DLPG, TKAD, and FSS. Positions 41 and 63 each coordinate Mg(2+).

It belongs to the TRAFAC class TrmE-Era-EngA-EngB-Septin-like GTPase superfamily. EngB GTPase family. Mg(2+) is required as a cofactor.

In terms of biological role, necessary for normal cell division and for the maintenance of normal septation. This Vibrio cholerae serotype O1 (strain ATCC 39315 / El Tor Inaba N16961) protein is Probable GTP-binding protein EngB.